A 319-amino-acid chain; its full sequence is Ribosomal RNA small subunit methyltransferase H (319 aa).

Residues 34–36, Asp-54, Phe-83, Asp-104, and Gln-111 each bind S-adenosyl-L-methionine; that span reads GGH.

This sequence belongs to the methyltransferase superfamily. RsmH family.

Its subcellular location is the cytoplasm. It carries out the reaction cytidine(1402) in 16S rRNA + S-adenosyl-L-methionine = N(4)-methylcytidine(1402) in 16S rRNA + S-adenosyl-L-homocysteine + H(+). Its function is as follows. Specifically methylates the N4 position of cytidine in position 1402 (C1402) of 16S rRNA. This Lactiplantibacillus plantarum (strain ATCC BAA-793 / NCIMB 8826 / WCFS1) (Lactobacillus plantarum) protein is Ribosomal RNA small subunit methyltransferase H.